The following is a 687-amino-acid chain: Glycine--tRNA ligase beta subunit (687 aa).

Belongs to the class-II aminoacyl-tRNA synthetase family. Tetramer of two alpha and two beta subunits.

It is found in the cytoplasm. The enzyme catalyses tRNA(Gly) + glycine + ATP = glycyl-tRNA(Gly) + AMP + diphosphate. This Neisseria meningitidis serogroup C (strain 053442) protein is Glycine--tRNA ligase beta subunit.